Consider the following 874-residue polypeptide: Alanine--tRNA ligase (874 aa).

Residues histidine 562, histidine 566, cysteine 664, and histidine 668 each contribute to the Zn(2+) site.

It belongs to the class-II aminoacyl-tRNA synthetase family. Requires Zn(2+) as cofactor.

It is found in the cytoplasm. The catalysed reaction is tRNA(Ala) + L-alanine + ATP = L-alanyl-tRNA(Ala) + AMP + diphosphate. Catalyzes the attachment of alanine to tRNA(Ala) in a two-step reaction: alanine is first activated by ATP to form Ala-AMP and then transferred to the acceptor end of tRNA(Ala). Also edits incorrectly charged Ser-tRNA(Ala) and Gly-tRNA(Ala) via its editing domain. The polypeptide is Alanine--tRNA ligase (Neisseria meningitidis serogroup B (strain ATCC BAA-335 / MC58)).